The sequence spans 204 residues: Thymidylate kinase (204 aa).

Belongs to the thymidylate kinase family. Homodimer; the dimer arrangement is orthogonal and not antiparallel as in human enzyme.

It catalyses the reaction dTMP + ATP = dTDP + ADP. Its pathway is pyrimidine metabolism; dTTP biosynthesis. In terms of biological role, poxvirus TMP kinase is able to phosphorylate dTMP, dUMP and also dGMP from any purine and pyrimidine nucleoside triphosphate. The large substrate specificity is explained by the presence of a canal connecting the edge of the dimer interface to the TMP base binding pocket, canal not found in the human homolog. This chain is Thymidylate kinase (OPG178), found in Cynomys gunnisoni (Gunnison's prairie dog).